The primary structure comprises 111 residues: Large ribosomal subunit protein uL24 (111 aa).

The protein belongs to the universal ribosomal protein uL24 family. Part of the 50S ribosomal subunit.

Its function is as follows. One of two assembly initiator proteins, it binds directly to the 5'-end of the 23S rRNA, where it nucleates assembly of the 50S subunit. In terms of biological role, one of the proteins that surrounds the polypeptide exit tunnel on the outside of the subunit. The sequence is that of Large ribosomal subunit protein uL24 from Bifidobacterium animalis subsp. lactis (strain AD011).